The primary structure comprises 992 residues: Probable translation initiation factor IF-2 (992 aa).

One can recognise a DOD-type homing endonuclease domain in the interval 96–220 (KNWHGVTVTP…LSLALLRFGI (125 aa)). In terms of domain architecture, tr-type G spans 399 to 616 (TTETHNFIAN…LIAGLSQRYL (218 aa)). GTP is bound by residues 472–476 (DTPGH) and 526–529 (NKID).

Belongs to the TRAFAC class translation factor GTPase superfamily. Classic translation factor GTPase family. IF-2 subfamily. In terms of processing, this protein undergoes a protein self splicing that involves a post-translational excision of the intervening region (intein) followed by peptide ligation.

In terms of biological role, function in general translation initiation by promoting the binding of the formylmethionine-tRNA to ribosomes. Seems to function along with eIF-2. This is Probable translation initiation factor IF-2 (infB) from Pyrococcus abyssi (strain GE5 / Orsay).